Consider the following 977-residue polypeptide: Disks large-associated protein 3 (977 aa).

Residues 1-10 are compositionally biased toward basic and acidic residues; that stretch reads MRGYHGDRGS. Disordered regions lie at residues 1–24, 52–96, 137–167, 181–289, 398–417, and 529–582; these read MRGY…QHMD, AGLG…MYPG, FHTL…ESPS, AKSH…CLDA, AMGD…SPKA, and PGSS…SADG. Low complexity predominate over residues 53-73; sequence GLGHLSPEGPLSLSEGPSSVG. At serine 58 the chain carries Phosphoserine. Over residues 74 to 87 the composition is skewed to gly residues; the sequence is PEGGPGGVGAGGGS. Residues 189–201 show a composition bias toward basic and acidic residues; it reads PGKRDYNGPKADG. Positions 221-245 are enriched in basic residues; that stretch reads SHHHHHHHHHHHHQSRHGKRSKSKD. The span at 258–271 shows a compositional bias: low complexity; it reads GWWSSDDNLDSDSG. 4 positions are modified to phosphoserine: serine 404, serine 407, serine 410, and serine 414. Residues 538–547 are compositionally biased toward pro residues; that stretch reads APPPIPPGSQ. Phosphoserine occurs at positions 641 and 643. 2 disordered regions span residues 739 to 788 and 906 to 939; these read EGYP…RTSP and EEKK…RQRQ. Basic and acidic residues-rich tracts occupy residues 767-777 and 925-939; these read GRRDSWMERGS and PVKE…RQRQ. Phosphoserine is present on residues serine 930, serine 933, and serine 965.

Belongs to the SAPAP family. As to quaternary structure, interacts with DLG4/PSD-95. Highly expressed in central and peripherical nervous system (at protein level).

Its subcellular location is the cell membrane. The protein resides in the postsynaptic density. It localises to the synapse. In terms of biological role, may play a role in the molecular organization of synapses and neuronal cell signaling. Could be an adapter protein linking ion channel to the subsynaptic cytoskeleton. May induce enrichment of PSD-95/SAP90 at the plasma membrane. The chain is Disks large-associated protein 3 (Dlgap3) from Mus musculus (Mouse).